A 128-amino-acid chain; its full sequence is Probable 4-amino-4-deoxy-L-arabinose-phosphoundecaprenol flippase subunit ArnF (128 aa).

Residues 1-2 are Cytoplasmic-facing; that stretch reads MG. Residues 3–23 traverse the membrane as a helical segment; that stretch reads LMWGLFSVIIASVAQLSLGFA. Topologically, residues 24–35 are periplasmic; that stretch reads ASHLPPMTHLWD. Residues 36-56 form a helical membrane-spanning segment; it reads FIAALLAFGLDARILLLGLLG. At 57 to 76 the chain is on the cytoplasmic side; it reads YLLSVFCWYKTLHKLALSKA. The chain crosses the membrane as a helical span at residues 77 to 97; sequence YALLSMSYVLVWIASMVLPGW. Residues 98 to 100 are Periplasmic-facing; it reads EGT. A helical membrane pass occupies residues 101–121; the sequence is FSLKALLGVACIMSGLMLIFL. At 122–128 the chain is on the cytoplasmic side; sequence PTTKQRY.

This sequence belongs to the ArnF family. In terms of assembly, heterodimer of ArnE and ArnF.

It localises to the cell inner membrane. The protein operates within bacterial outer membrane biogenesis; lipopolysaccharide biosynthesis. Functionally, translocates 4-amino-4-deoxy-L-arabinose-phosphoundecaprenol (alpha-L-Ara4N-phosphoundecaprenol) from the cytoplasmic to the periplasmic side of the inner membrane. The sequence is that of Probable 4-amino-4-deoxy-L-arabinose-phosphoundecaprenol flippase subunit ArnF from Shigella sonnei (strain Ss046).